The following is an 83-amino-acid chain: MSGATGERPFSDILTSIRYWVIHSITIPSLFIAGWLFVSTGLAYDVFGSPRPNEYFTEDRQETPLITDRFNALEQVKKFSEVN.

A helical transmembrane segment spans residues 21-35 (VIHSITIPSLFIAGW). His23 contributes to the heme binding site.

It belongs to the PsbE/PsbF family. Heterodimer of an alpha subunit and a beta subunit. PSII is composed of 1 copy each of membrane proteins PsbA, PsbB, PsbC, PsbD, PsbE, PsbF, PsbH, PsbI, PsbJ, PsbK, PsbL, PsbM, PsbT, PsbX, PsbY, PsbZ, Psb30/Ycf12, at least 3 peripheral proteins of the oxygen-evolving complex and a large number of cofactors. It forms dimeric complexes. Heme b is required as a cofactor.

The protein resides in the plastid. The protein localises to the chloroplast thylakoid membrane. In terms of biological role, this b-type cytochrome is tightly associated with the reaction center of photosystem II (PSII). PSII is a light-driven water:plastoquinone oxidoreductase that uses light energy to abstract electrons from H(2)O, generating O(2) and a proton gradient subsequently used for ATP formation. It consists of a core antenna complex that captures photons, and an electron transfer chain that converts photonic excitation into a charge separation. The chain is Cytochrome b559 subunit alpha from Chlorella vulgaris (Green alga).